A 743-amino-acid polypeptide reads, in one-letter code: Pentatricopeptide repeat-containing protein At2g16880 (743 aa).

16 PPR repeats span residues 130–164 (SKALFDIALSAYLHEGKPHVALQIFQKMIRLKLKP), 165–202 (NLLTCNTLLIGLVRYPSSFSISSAREVFDDMVKIGVSL), 203–233 (NVQTFNVLVNGYCLEGKLEDALGMLERMVSE), 239–273 (DNVTYNTILKAMSKKGRLSDLKELLLDMKKNGLVP), 274–308 (NRVTYNNLVYGYCKLGSLKEAFQIVELMKQTNVLP), 309–343 (DLCTYNILINGLCNAGSMREGLELMDAMKSLKLQP), 344–378 (DVVTYNTLIDGCFELGLSLEARKLMEQMENDGVKA), 379–414 (NQVTHNISLKWLCKEEKREAVTRKVKELVDMHGFSP), 415–449 (DIVTYHTLIKAYLKVGDLSGALEMMREMGQKGIKM), 450–484 (NTITLNTILDALCKERKLDEAHNLLNSAHKRGFIV), 485–519 (DEVTYGTLIMGFFREEKVEKALEMWDEMKKVKITP), 520–554 (TVSTFNSLIGGLCHHGKTELAMEKFDELAESGLLP), 555–589 (DDSTFNSIILGYCKEGRVEKAFEFYNESIKHSFKP), 590–620 (DNYTCNILLNGLCKEGMTEKALNFFNTLIEE), 624–658 (DTVTYNTMISAFCKDKKLKEAYDLLSEMEEKGLEP), and 659–689 (DRFTYNSFISLLMEDGKLSETDELLKKFSGK).

Belongs to the PPR family. P subfamily.

In Arabidopsis thaliana (Mouse-ear cress), this protein is Pentatricopeptide repeat-containing protein At2g16880.